Here is a 467-residue protein sequence, read N- to C-terminus: Argininosuccinate lyase (467 aa).

Belongs to the lyase 1 family. Argininosuccinate lyase subfamily.

The protein resides in the cytoplasm. The enzyme catalyses 2-(N(omega)-L-arginino)succinate = fumarate + L-arginine. It functions in the pathway amino-acid biosynthesis; L-arginine biosynthesis; L-arginine from L-ornithine and carbamoyl phosphate: step 3/3. The sequence is that of Argininosuccinate lyase from Anaeromyxobacter dehalogenans (strain 2CP-C).